Reading from the N-terminus, the 389-residue chain is Chalcone synthase 2 (389 aa).

Cysteine 164 is a catalytic residue.

Belongs to the thiolase-like superfamily. Chalcone/stilbene synthases family.

It carries out the reaction (E)-4-coumaroyl-CoA + 3 malonyl-CoA + 3 H(+) = 2',4,4',6'-tetrahydroxychalcone + 3 CO2 + 4 CoA. It participates in secondary metabolite biosynthesis; flavonoid biosynthesis. In terms of biological role, the primary product of this enzyme is 4,2',4',6'-tetrahydroxychalcone (also termed naringenin-chalcone or chalcone) which can under specific conditions spontaneously isomerize into naringenin. This chain is Chalcone synthase 2 (CHS2), found in Pisum sativum (Garden pea).